The chain runs to 71 residues: Translation initiation factor IF-1 (71 aa).

In terms of domain architecture, S1-like spans 1-71 (MSKDDLIQFT…LTKGRVIHRH (71 aa)).

Belongs to the IF-1 family. As to quaternary structure, component of the 30S ribosomal translation pre-initiation complex which assembles on the 30S ribosome in the order IF-2 and IF-3, IF-1 and N-formylmethionyl-tRNA(fMet); mRNA recruitment can occur at any time during PIC assembly.

It is found in the cytoplasm. In terms of biological role, one of the essential components for the initiation of protein synthesis. Stabilizes the binding of IF-2 and IF-3 on the 30S subunit to which N-formylmethionyl-tRNA(fMet) subsequently binds. Helps modulate mRNA selection, yielding the 30S pre-initiation complex (PIC). Upon addition of the 50S ribosomal subunit IF-1, IF-2 and IF-3 are released leaving the mature 70S translation initiation complex. In Rickettsia typhi (strain ATCC VR-144 / Wilmington), this protein is Translation initiation factor IF-1.